The sequence spans 450 residues: Phosphoglucosamine mutase (450 aa).

S97 functions as the Phosphoserine intermediate in the catalytic mechanism. Mg(2+)-binding residues include S97, D236, D238, and D240. A Phosphoserine modification is found at S97.

This sequence belongs to the phosphohexose mutase family. Requires Mg(2+) as cofactor. In terms of processing, activated by phosphorylation.

It catalyses the reaction alpha-D-glucosamine 1-phosphate = D-glucosamine 6-phosphate. In terms of biological role, catalyzes the conversion of glucosamine-6-phosphate to glucosamine-1-phosphate. This Prochlorococcus marinus (strain AS9601) protein is Phosphoglucosamine mutase.